The chain runs to 174 residues: Suppressor of RNA silencing (174 aa).

Residues 86–116 adopt a coiled-coil conformation; sequence HAQLRSLNAELDTLEAREESLRAQIKALSAG.

The protein belongs to the virgaviridae suppressor of RNA silencing family.

Its function is as follows. Suppressor of RNA-mediated gene silencing, also known as post-transcriptional gene silencing (PTGS), a mechanism of plant viral defense that performs sequence-specific inhibition of viral mRNAs expression. In Soil-borne wheat mosaic virus (strain United States/Nebraska/1981) (SBWMV), this protein is Suppressor of RNA silencing.